The sequence spans 302 residues: Tegument protein VP22 (302 aa).

Residues 1–10 show a composition bias toward basic and acidic residues; sequence MASSDGDRLC. 2 disordered regions span residues 1 to 42 and 125 to 170; these read MASS…PDDS and SFTK…SSWC. The interaction with gE stretch occupies residues 154 to 244; that stretch reads RPISFSTAPK…ANEADLGEGA (91 aa). Residues 157 to 170 show a composition bias toward polar residues; it reads SFSTAPKTATSSWC. Positions 212–224 match the Nuclear export signal motif; that stretch reads LDRLLTGAVIRIT. A disordered region spans residues 243 to 302; sequence GASVSKRGHNRKTGDLQGGMGNEPMYAQVRKPKSRTDTQTTGRITNRSRARSASRTDTRK.

The protein belongs to the alphaherpesvirinae VP22 tegument protein family. Interacts with gE (via C-terminus); this interaction is necessary for the recruitment of VP22/ORF9 to the Golgi and its packaging into virions. Interacts with gM (via C-terminus). Interacts with VP16/ORF10; this interaction allows the formation of a tripartite complex composed of VP16/ORF10, VP22/ORF9 and VHS/ORF17. Interacts with the capsid-binding protein ORF44. Interacts with host CGAS. Post-translationally, highly phosphorylated in the host cell. Packaging is selective for underphosphorylated forms.

The protein resides in the virion tegument. It localises to the host cytoplasm. Its subcellular location is the host nucleus. It is found in the host Golgi apparatus. Functionally, tegument protein that plays different roles during the time course of infection. Participates in both the accumulation of viral mRNAs and viral protein translation at late time of infection. Modulates the RNase activity of the virion host shutoff protein ORF17 probably to ensure necessary levels of key cellular mRNAs and proteins. Plays a role in microtubule reorganization that occurs after viral infection by stabilizing microtubule network. Plays a role in the inhibition of host innate immune system by targeting the CGAS enzymatic activity which is the principal cytosolic DNA sensor that detects invading viral DNA. Acts by mediating disruption of liquid-like droplets in which CGAS is activated, thereby preventing CGAS activity. The polypeptide is Tegument protein VP22 (Homo sapiens (Human)).